The sequence spans 978 residues: Tyrosine-protein kinase transforming protein fms (978 aa).

At 1-543 (RMPSGPGHYG…IGAHTPLPDE (543 aa)) the chain is on the extracellular side. Ig-like C2-type domains follow at residues 55–134 (PVIQ…IHLY), 141–231 (PWKV…KVQK), 236–331 (PATL…RVVE), 333–431 (AYSN…LTLR), and 434–533 (PEVR…WPIS). A disulfide bond links Cys76 and Cys118. 11 N-linked (GlcNAc...) asparagine; by host glycosylation sites follow: Asn79, Asn107, Asn128, Asn187, Asn309, Asn320, Asn336, Asn369, Asn444, Asn511, and Asn524. Cystine bridges form between Cys161–Cys211 and Cys258–Cys312. Cys451 and Cys516 are oxidised to a cystine. Residues 544–568 (LLFTPVLLTCMSIMALLLLLLLLLL) traverse the membrane as a helical segment. At 569 to 978 (YKYKQKPKYQ…PWQRTPPVAR (410 aa)) the chain is on the cytoplasmic side. The region spanning 613 to 942 (LQFGKTLGTG…PTFQQICSLL (330 aa)) is the Protein kinase domain. Residues 619 to 627 (LGTGAFGKV) and Lys647 each bind ATP. Asp810 functions as the Proton acceptor in the catalytic mechanism. Tyr841 carries the post-translational modification Phosphotyrosine; by autocatalysis. Residues 952–978 (VPNYTNLPSSSSSRLLRPWQRTPPVAR) are disordered. Residues 958–969 (LPSSSSSRLLRP) are compositionally biased toward low complexity. Position 973 is a phosphothreonine (Thr973).

The protein belongs to the protein kinase superfamily. Tyr protein kinase family. CSF-1/PDGF receptor subfamily.

The protein resides in the membrane. The enzyme catalyses L-tyrosyl-[protein] + ATP = O-phospho-L-tyrosyl-[protein] + ADP + H(+). In terms of biological role, truncated version of the receptor for colony-stimulating factor 1 (CSF-1). This chain is Tyrosine-protein kinase transforming protein fms (V-FMS), found in Felidae (cat family).